Consider the following 109-residue polypeptide: Oncomodulin (109 aa).

S2 carries the post-translational modification N-acetylserine. 2 consecutive EF-hand domains span residues 39-74 (MSAS…FESG) and 78-109 (LTES…MVHS). D52, D54, S56, Y58, E63, D91, D93, D95, K97, and E102 together coordinate Ca(2+).

This sequence belongs to the parvalbumin family. In terms of tissue distribution, abundant in the organ of Corti.

Its function is as follows. Has some calmodulin-like activity with respect to enzyme activation and growth regulation. Binds two calcium ions. This is Oncomodulin (OCM) from Cavia porcellus (Guinea pig).